The primary structure comprises 572 residues: 2-isopropylmalate synthase (572 aa).

The region spanning 31-305 is the Pyruvate carboxyltransferase domain; sequence PIWMSTDLRD…DPGLDFSNIN (275 aa). The Mg(2+) site is built by D40, H244, H246, and N280. The tract at residues 437-572 is regulatory domain; the sequence is NATPVHYVGH…MNDATESVGV (136 aa).

The protein belongs to the alpha-IPM synthase/homocitrate synthase family. LeuA type 2 subfamily. In terms of assembly, homodimer. Requires Mg(2+) as cofactor.

It is found in the cytoplasm. The enzyme catalyses 3-methyl-2-oxobutanoate + acetyl-CoA + H2O = (2S)-2-isopropylmalate + CoA + H(+). The protein operates within amino-acid biosynthesis; L-leucine biosynthesis; L-leucine from 3-methyl-2-oxobutanoate: step 1/4. Its function is as follows. Catalyzes the condensation of the acetyl group of acetyl-CoA with 3-methyl-2-oxobutanoate (2-ketoisovalerate) to form 3-carboxy-3-hydroxy-4-methylpentanoate (2-isopropylmalate). This Paraburkholderia xenovorans (strain LB400) protein is 2-isopropylmalate synthase.